We begin with the raw amino-acid sequence, 568 residues long: Dual specificity tyrosine-phosphorylation-regulated kinase 3 (568 aa).

The disordered stretch occupies residues 1–168 (MKWKEKLGDG…HGVIGGPNNG (168 aa)). The span at 77-114 (SNTVQSDGISDSEKCSPTVSQGKSSDCLNTVKSNSSSK) shows a compositional bias: polar residues. The 314-residue stretch at 189 to 502 (YEVLKIIGKG…PAQALRHPWI (314 aa)) folds into the Protein kinase domain. Residues 195–203 (IGKGSFGQV) and K218 each bind ATP. The active-site Proton acceptor is the D315. S330 carries the post-translational modification Phosphoserine. Y349 is modified (phosphotyrosine). The Nuclear localization signal signature appears at 448-461 (RSRRGKKRGPPGSK).

It belongs to the protein kinase superfamily. CMGC Ser/Thr protein kinase family. MNB/DYRK subfamily. In terms of assembly, interacts with SIRT1. Mg(2+) is required as a cofactor. Protein kinase activity is activated following autophosphorylation at Tyr-349. Autophosphorylation at Ser-330 stabilizes the protein and enhances the protein kinase activity. Post-translationally, ubiquitinated at anaphase by the anaphase-promoting complex (APC/C), leading to its degradation by the proteasome.

Its subcellular location is the nucleus. The protein localises to the cytoplasm. It localises to the nucleus speckle. It is found in the cytoplasmic granule. The protein resides in the cytoskeleton. Its subcellular location is the microtubule organizing center. The protein localises to the centrosome. The catalysed reaction is L-seryl-[protein] + ATP = O-phospho-L-seryl-[protein] + ADP + H(+). The enzyme catalyses L-threonyl-[protein] + ATP = O-phospho-L-threonyl-[protein] + ADP + H(+). It carries out the reaction L-tyrosyl-[protein] + ATP = O-phospho-L-tyrosyl-[protein] + ADP + H(+). Its activity is regulated as follows. Protein kinase activity is activated following autophosphorylation at Tyr-349. Its function is as follows. Dual-specificity protein kinase that promotes disassembly of several types of membraneless organelles during mitosis, such as stress granules, nuclear speckles and pericentriolar material. Dual-specificity tyrosine-regulated kinases (DYRKs) autophosphorylate a critical tyrosine residue in their activation loop and phosphorylate their substrate on serine and threonine residues. Acts as a central dissolvase of membraneless organelles during the G2-to-M transition, after the nuclear-envelope breakdown: acts by mediating phosphorylation of multiple serine and threonine residues in unstructured domains of proteins, such as SRRM1 and PCM1. Does not mediate disassembly of all membraneless organelles: disassembly of P-body and nucleolus is not regulated by DYRK3. Dissolution of membraneless organelles at the onset of mitosis is also required to release mitotic regulators, such as ZNF207, from liquid-unmixed organelles where they are sequestered and keep them dissolved during mitosis. Regulates mTORC1 by mediating the dissolution of stress granules: during stressful conditions, DYRK3 partitions from the cytosol to the stress granule, together with mTORC1 components, which prevents mTORC1 signaling. When stress signals are gone, the kinase activity of DYRK3 is required for the dissolution of stress granule and mTORC1 relocation to the cytosol: acts by mediating the phosphorylation of the mTORC1 inhibitor AKT1S1, allowing full reactivation of mTORC1 signaling. Also acts as a negative regulator of EPO-dependent erythropoiesis: may place an upper limit on red cell production during stress erythropoiesis. Inhibits cell death due to cytokine withdrawal in hematopoietic progenitor cells. Promotes cell survival upon genotoxic stress through phosphorylation of SIRT1: this in turn inhibits p53/TP53 activity and apoptosis. The protein is Dual specificity tyrosine-phosphorylation-regulated kinase 3 of Macaca fascicularis (Crab-eating macaque).